The chain runs to 81 residues: MAGGSTGERPFSDIITSIRYWVIHSITIPSLFIAGWLFVSTGLAYDVFGTPRPNEYFTQERTQIPLVNDRFNAKQELEDLL.

A helical transmembrane segment spans residues 22 to 36; sequence VIHSITIPSLFIAGW. H24 provides a ligand contact to heme.

The protein belongs to the PsbE/PsbF family. As to quaternary structure, heterodimer of an alpha subunit and a beta subunit. PSII is composed of 1 copy each of membrane proteins PsbA, PsbB, PsbC, PsbD, PsbE, PsbF, PsbH, PsbI, PsbJ, PsbK, PsbL, PsbM, PsbT, PsbX, PsbY, PsbZ, Psb30/Ycf12, at least 3 peripheral proteins of the oxygen-evolving complex and a large number of cofactors. It forms dimeric complexes. The cofactor is heme b.

It localises to the plastid. Its subcellular location is the chloroplast thylakoid membrane. In terms of biological role, this b-type cytochrome is tightly associated with the reaction center of photosystem II (PSII). PSII is a light-driven water:plastoquinone oxidoreductase that uses light energy to abstract electrons from H(2)O, generating O(2) and a proton gradient subsequently used for ATP formation. It consists of a core antenna complex that captures photons, and an electron transfer chain that converts photonic excitation into a charge separation. The protein is Cytochrome b559 subunit alpha of Cyanidioschyzon merolae (strain NIES-3377 / 10D) (Unicellular red alga).